The chain runs to 175 residues: MAKADKATAVADIAEQFKEATATVVTEYRGLTVANLAQLRRSLGESATYTVAKNTLVKRAAAEAGIDGLDELFTGPTAIAFVQGEPVDAAKAIKAFAKEHKALVIKGGYMEGRALSIDEVNRIADLESREVLLAKLAGAMKGNLAKAAGLFNAPASQVARLAAALQEKKAAEEAA.

The protein belongs to the universal ribosomal protein uL10 family. As to quaternary structure, part of the ribosomal stalk of the 50S ribosomal subunit. The N-terminus interacts with L11 and the large rRNA to form the base of the stalk. The C-terminus forms an elongated spine to which L12 dimers bind in a sequential fashion forming a multimeric L10(L12)X complex.

Its function is as follows. Forms part of the ribosomal stalk, playing a central role in the interaction of the ribosome with GTP-bound translation factors. The protein is Large ribosomal subunit protein uL10 of Mycobacterium sp. (strain JLS).